Here is a 414-residue protein sequence, read N- to C-terminus: Glucose-1-phosphate adenylyltransferase (414 aa).

Residues Tyr99, Gly164, 181-182 (EK), and Ser199 each bind alpha-D-glucose 1-phosphate.

Belongs to the bacterial/plant glucose-1-phosphate adenylyltransferase family. In terms of assembly, homotetramer.

It carries out the reaction alpha-D-glucose 1-phosphate + ATP + H(+) = ADP-alpha-D-glucose + diphosphate. It functions in the pathway glycan biosynthesis; glycogen biosynthesis. Functionally, involved in the biosynthesis of ADP-glucose, a building block required for the elongation reactions to produce glycogen. Catalyzes the reaction between ATP and alpha-D-glucose 1-phosphate (G1P) to produce pyrophosphate and ADP-Glc. The chain is Glucose-1-phosphate adenylyltransferase from Bifidobacterium longum (strain DJO10A).